The sequence spans 136 residues: FK506-binding protein 2 (136 aa).

An N-terminal signal peptide occupies residues 1 to 17 (MLSQIWILFTFMVCVIA). In terms of domain architecture, PPIase FKBP-type spans 45–134 (GDMVSVHYTG…DFDVELVDIA (90 aa)).

This sequence belongs to the FKBP-type PPIase family. FKBP2 subfamily.

The protein localises to the endoplasmic reticulum. It catalyses the reaction [protein]-peptidylproline (omega=180) = [protein]-peptidylproline (omega=0). Inhibited by both FK506 and rapamycin. PPIases accelerate the folding of proteins. It catalyzes the cis-trans isomerization of proline imidic peptide bonds in oligopeptides. This is FK506-binding protein 2 (FPR2) from Candida glabrata (strain ATCC 2001 / BCRC 20586 / JCM 3761 / NBRC 0622 / NRRL Y-65 / CBS 138) (Yeast).